A 403-amino-acid chain; its full sequence is UPF0229 protein CKR_0568 (403 aa).

The interval 71 to 109 is disordered; that stretch reads SSGVGSGDGSQKKGDRIGKAIKDRDGKGNQGAGNQEGED. Residues 80-97 are compositionally biased toward basic and acidic residues; sequence SQKKGDRIGKAIKDRDGK.

This sequence belongs to the UPF0229 family.

This is UPF0229 protein CKR_0568 from Clostridium kluyveri (strain NBRC 12016).